The following is a 517-amino-acid chain: DNA relaxase MbeA (517 aa).

The active-site O-(5'-phospho-DNA)-tyrosine intermediate is the Tyr19. His97, Glu104, and Asn106 together coordinate a divalent metal cation. Disordered stretches follow at residues 281–310, 380–405, and 496–517; these read YSPVHSLDRGIAGKTPGRGERGDDAAQEGR, PSVREISGGDSLSGERVGTSEGVTQS, and SLERERQPEIQERTLDGPSLGW. Basic and acidic residues predominate over residues 297 to 310; that stretch reads GRGERGDDAAQEGR. Positions 496–510 are enriched in basic and acidic residues; that stretch reads SLERERQPEIQERTL.

To E.coli MbaA and MbkA. Interacts with MbeB and MbeC to form the relaxosome. Requires Mn(2+) as cofactor. It depends on Co(2+) as a cofactor. The cofactor is Ni(2+).

It carries out the reaction ATP-independent breakage of single-stranded DNA, followed by passage and rejoining.. Its function is as follows. Relaxase involved in plasmid ColE1 conjugative mobilization and is thus essential to promote the specific transfer of the plasmid during conjugation. First catalyzes the specific cleavage of one of the DNA strands at oriT, forming a covalent 5'-phosphotyrosine intermediate. The nic site corresponds to 5'-(1469)CTGG/CTTA(1462)-3' in the cleaved strand. The cleaved strand is then transferred through the dedicated type IV secretion apparatus. MbeA remains covalently linked at the 5' end of the strand, and once in the recipient cell, it probably catalyzes the rejoining of the two ends of the strand, re-forming the circular plasmid DNA. Is functional in vitro without a requirement for the conjugative accessory proteins. The chain is DNA relaxase MbeA (mbeA) from Escherichia coli.